A 146-amino-acid chain; its full sequence is Putative type II restriction enzyme MjaORF1200P (146 aa).

This sequence to A.pernix APE2001.

It carries out the reaction Endonucleolytic cleavage of DNA to give specific double-stranded fragments with terminal 5'-phosphates.. Functionally, a putative type II restriction enzyme, its methylase would be M.MjaORF1200P (AC Q58600). This is Putative type II restriction enzyme MjaORF1200P from Methanocaldococcus jannaschii (strain ATCC 43067 / DSM 2661 / JAL-1 / JCM 10045 / NBRC 100440) (Methanococcus jannaschii).